The chain runs to 361 residues: Replication-associated protein (361 aa).

A disordered region spans residues 1–31 (MSSLPVSESEGEGSGTSVQVPSRGGQVTPGE). Residues 35–138 (SLRTKHVFLT…PESSWEFGKF (104 aa)) enclose the CRESS-DNA virus Rep endonuclease domain. The RCR-1 signature appears at 42-45 (FLTY). Residues glutamate 76, histidine 84, and histidine 86 each coordinate a divalent metal cation. Positions 84-86 (HLH) match the RCR-2 motif. Tyrosine 124 functions as the For DNA cleavage activity in the catalytic mechanism. Positions 124–127 (YCMK) match the RCR-3 motif. Residues 192–204 (SANALFPDPPQTY) are oligomerization. 243-250 (GPTRTGKT) provides a ligand contact to ATP. The tract at residues 266-285 (VNFLEEWNCQAQFNIIDDIP) is transactivation. Residues 307 to 317 (KYGKKKRIPNG) carry the Nuclear localization signal motif.

This sequence belongs to the geminiviridae Rep protein family. In terms of assembly, homooligomer. Rep binds to repeated DNA motifs (iterons). Forms the O-complex, which is a Rep-DNA complex involved in the initiation of RCR. Part of the C- and V-complexes which are RepA-Rep-DNA complexes involved in the c-sense and v-sense transcription. The cofactor is Mg(2+). Mn(2+) is required as a cofactor.

It is found in the host nucleus. In terms of biological role, essential for the replication of viral ssDNA. The closed circular ssDNA genome is first converted to a superhelical dsDNA. Rep binds a specific region at the genome origin of replication. It introduces an endonucleolytic nick within the conserved sequence 5'-TAATATTAC-3' in the intergenic region of the genome present in all geminiviruses, thereby initiating the rolling circle replication (RCR). Following cleavage, binds covalently to the 5'-phosphate of DNA as a tyrosyl ester. The cleavage gives rise to a free 3'-OH that serves as a primer for the cellular DNA polymerase. The polymerase synthesizes the (+) strand DNA by rolling circle mechanism. After one round of replication, a Rep-catalyzed nucleotidyl transfer reaction releases a circular single-stranded virus genome, thereby terminating the replication. Displays origin-specific DNA cleavage, nucleotidyl transferase, ATPase and helicase activities. Acts as an inhibitor of C-sense gene transcription. This is Replication-associated protein from Avena sativa (Oat).